Here is a 609-residue protein sequence, read N- to C-terminus: Sporulation-specific protein 21 (609 aa).

Disordered stretches follow at residues 1–50, 68–96, and 124–165; these read MDNI…LENS, PASK…DGNS, and KLDS…SIKG. Polar residues predominate over residues 10-31; it reads MEGTSTMTVTSRSSEDSSCISN. Positions 32-43 are enriched in basic and acidic residues; it reads HEQDTDTHKDGD. Residues 68–81 show a composition bias toward low complexity; the sequence is PASKSSRSIGSMKS. 2 stretches are compositionally biased toward polar residues: residues 82–96 and 127–136; these read NQSL…DGNS and STGSQRSKNN. The segment covering 143 to 159 has biased composition (low complexity); that stretch reads SSTTSQTTCSSSSSSSS. 3 coiled-coil regions span residues 283–342, 357–393, and 424–483; these read RTKI…DNES, RETL…ATNF, and ENLT…LLIE. Residues 586-609 form a disordered region; the sequence is DQKSNQNSSTPYKQSQRQVPHSIK. A compositionally biased stretch (polar residues) spans 587–609; that stretch reads QKSNQNSSTPYKQSQRQVPHSIK.

Belongs to the MPC70 family. In terms of assembly, interacts directly with MPC54, NUD1 and SPC42. Interacts with ADY3. Interacts with ADY4. Probable component of a SPB complex composed of ADY3, SSP1, DON1, MPC54, SPO21/MPC70, NUD1 and CNM67.

It localises to the prospore membrane. Its subcellular location is the cytoplasm. The protein resides in the cytoskeleton. The protein localises to the spindle pole. Its function is as follows. Involved in the pathway that organizes the shaping and sizing of the prospore membrane (PSM) during sporulation. May provide a meiosis-specific scaffold for the assembly of other proteins on spindle pole bodies (SPBs), and may be a limiting component for SPB formation. This chain is Sporulation-specific protein 21 (SPO21), found in Saccharomyces cerevisiae (strain ATCC 204508 / S288c) (Baker's yeast).